Consider the following 256-residue polypeptide: DNA repair protein RecO (256 aa).

Belongs to the RecO family.

Its function is as follows. Involved in DNA repair and RecF pathway recombination. The sequence is that of DNA repair protein RecO from Thiobacillus denitrificans (strain ATCC 25259 / T1).